A 142-amino-acid polypeptide reads, in one-letter code: Large ribosomal subunit protein uL13 (142 aa).

The protein belongs to the universal ribosomal protein uL13 family. Part of the 50S ribosomal subunit.

Its function is as follows. This protein is one of the early assembly proteins of the 50S ribosomal subunit, although it is not seen to bind rRNA by itself. It is important during the early stages of 50S assembly. The chain is Large ribosomal subunit protein uL13 from Syntrophobacter fumaroxidans (strain DSM 10017 / MPOB).